The following is a 254-amino-acid chain: Winged helix repair factor 1 (254 aa).

Residues 4 to 21 (KRRLLASEAFGVKRRRAP) carry the Bipartite nuclear localization signal motif. Winged helix domain regions lie at residues 32–104 (RAGS…GIVF), 120–179 (PCAG…LAVP), and 180–254 (GAGR…LPDT).

This sequence belongs to the STK19 family. Monomer in solution. Homodimer; when bound to DNA. Component of a transcription-coupled nucleotide excision repair (TC-NER) complex composed of STK19, ERCC6, ERCC8, DDA1, DDB1, ELOF1 and UVSSA which assembles and interacts with the multiprotein RNA polymerase II complex when it stalls at DNA lesions.

Its subcellular location is the nucleus. Its function is as follows. DNA-binding protein which is required for efficient transcription-coupled nucleotide excision repair (TC-NER). Acts as part of a TC-NER complex which assembles and interacts with RNA polymerase II (RNAPII) when it stalls at DNA lesions. TC-NER complex subunit UVSSA binds to the GTF2H1/p62 subunit of the TFIIH transcription factor complex, tethering TFIIH to the TC-NER complex. WHR1/STK19 then interacts with the XPD helicase subunit of TFIIH which guides TFIIH to DNA downstream of the stalled RNAPII, ensuring DNA repair. Directly interacts with RNAPII and also binds to downstream DNA. Promotes the timely removal of DNA damage-stalled RNAPII, allowing downstream NER factors to access DNA lesions. Required for monoubiquitination of UVSSA. Regulates repositioning and stabilization of UVSSA within the TC-NER complex. Stimulates ubiquitination of RNAPII complex member RBP1. Also binds to RNA and regulates the expression levels of many mRNAs. This is Winged helix repair factor 1 from Mus musculus (Mouse).